The primary structure comprises 371 residues: Alanine racemase (371 aa).

Residue Lys35 is the Proton acceptor; specific for D-alanine of the active site. Lys35 carries the N6-(pyridoxal phosphate)lysine modification. Residue Arg130 coordinates substrate. The Proton acceptor; specific for L-alanine role is filled by Tyr256. Met304 contacts substrate.

This sequence belongs to the alanine racemase family. The cofactor is pyridoxal 5'-phosphate.

The enzyme catalyses L-alanine = D-alanine. It participates in amino-acid biosynthesis; D-alanine biosynthesis; D-alanine from L-alanine: step 1/1. In terms of biological role, catalyzes the interconversion of L-alanine and D-alanine. May also act on other amino acids. The chain is Alanine racemase (alr) from Verminephrobacter eiseniae (strain EF01-2).